The following is a 294-amino-acid chain: Ethylene-inducing xylanase 3 (294 aa).

The N-terminal stretch at 1 to 19 is a signal peptide; it reads MVCFSSLFVAASAIAGVFA. Residues 31-226 form the GH11 domain; sequence QSTPSSQGTH…SSGSARINVA (196 aa). Glutamate 122 serves as the catalytic Nucleophile. Glutamate 213 acts as the Proton donor in catalysis. Residues 259-294 form the CBM1 domain; it reads SCAARWGQCGGSGWNGATCCSAGTCQAQNQWYSQCL.

Belongs to the glycosyl hydrolase 11 (cellulase G) family.

It catalyses the reaction Endohydrolysis of (1-&gt;4)-beta-D-xylosidic linkages in xylans.. The protein operates within glycan degradation; xylan degradation. In terms of biological role, endo-1,4-beta-xylanase involved in the hydrolysis of xylan, a major structural heterogeneous polysaccharide found in plant biomass representing the second most abundant polysaccharide in the biosphere, after cellulose. Exhibits immunity-inducing activity in Nicotiana benthamiana. Can induce strong oxidative burst, activate the expression of defense-related genes, and increase resistance against oomycete and fungal pathogens in N.benthamiana. This chain is Ethylene-inducing xylanase 3, found in Verticillium dahliae (strain VdLs.17 / ATCC MYA-4575 / FGSC 10137) (Verticillium wilt).